Reading from the N-terminus, the 1048-residue chain is Anguibactin system regulator (1048 aa).

A Carrier domain is found at 965–1039 (PIITASEDRV…AFAIIMDRCR (75 aa)).

Belongs to the ATP-dependent AMP-binding enzyme family.

It participates in siderophore biosynthesis; anguibactin biosynthesis. Functionally, bifunctional protein that plays an essential role in virulence. Plays a role in both the production of the siderophore anguibactin and the regulation of iron transport genes. The protein is Anguibactin system regulator (angR) of Vibrio anguillarum (Listonella anguillarum).